The primary structure comprises 241 residues: MSNEKMDTSPPSYDSHFTLETSMHRQLKDKRIILASGSPRRKQLFEQMGFPNVETCVSGFPEDLNKSMYITPWEYAADTSVQKAIAVYEKLAAEEDSPDIVVSADTILILDSEIMEKPNDPKHHLAMLKKLRNSKTPHKVFTAVSVIVPMEVPIHPGYVMKTHLEETQVKFDPSITDEFLEAYVRCGEGSDKAGGYAIQGHGALLIESIIGDFSNVVGLPIRATFKLMEEALEQGDADNYD.

Position 38 is a phosphoserine (Ser-38). The active-site Proton acceptor is Asp-105.

This sequence belongs to the Maf family. YhdE subfamily. A divalent metal cation serves as cofactor.

It localises to the cytoplasm. Its subcellular location is the nucleus. It catalyses the reaction dTTP + H2O = dTMP + diphosphate + H(+). The enzyme catalyses UTP + H2O = UMP + diphosphate + H(+). Its function is as follows. Nucleoside triphosphate pyrophosphatase that hydrolyzes dTTP and UTP. May have a dual role in cell division arrest and in preventing the incorporation of modified nucleotides into cellular nucleic acids. This Schizosaccharomyces pombe (strain 972 / ATCC 24843) (Fission yeast) protein is dTTP/UTP pyrophosphatase.